The following is a 344-amino-acid chain: Protein-arginine kinase (344 aa).

In terms of domain architecture, Phosphagen kinase C-terminal spans 14-244 (IVLSSRIRLA…KQIIQQERLA (231 aa)). Residues 17-21 (SSRIR), histidine 81, arginine 115, 166-170 (RASAM), and 197-202 (RGLYGE) contribute to the ATP site.

It belongs to the ATP:guanido phosphotransferase family.

The catalysed reaction is L-arginyl-[protein] + ATP = N(omega)-phospho-L-arginyl-[protein] + ADP + H(+). Functionally, catalyzes the specific phosphorylation of arginine residues in proteins. In Clostridium novyi (strain NT), this protein is Protein-arginine kinase.